A 427-amino-acid chain; its full sequence is Lactadherin (427 aa).

Residues 1 to 22 (MQFSRVLAALCGVLLCASGLFA) form the signal peptide. 2 consecutive EGF-like domains span residues 24–61 (SGDF…LVCN) and 64–108 (EKGP…IHCE). Intrachain disulfides connect Cys-28-Cys-39, Cys-33-Cys-49, and Cys-51-Cys-60. A glycan (N-linked (GlcNAc...) asparagine) is linked at Asn-61. Cystine bridges form between Cys-68-Cys-79, Cys-73-Cys-96, Cys-98-Cys-107, Cys-111-Cys-267, Cys-254-Cys-258, and Cys-272-Cys-427. Residues 87–89 (RGD) carry the Cell attachment site motif. 2 F5/8 type C domains span residues 111 to 267 (CSTK…LLGC) and 272 to 427 (CSEP…LLGC). A glycan (N-linked (GlcNAc...) asparagine) is linked at Asn-230. N-linked (GlcNAc...) asparagine glycosylation is found at Asn-280 and Asn-390.

As to expression, spleen, lung, heart, brain and muscle.

The protein resides in the membrane. It localises to the secreted. It is found in the cytoplasmic vesicle. The protein localises to the secretory vesicle. Its subcellular location is the acrosome membrane. Functionally, contributes to phagocytic removal of apoptotic cells in many tissues. Plays an important role in the maintenance of intestinal epithelial homeostasis and the promotion of mucosal healing. Promotes VEGF-dependent neovascularization. Specific ligand for the alpha-v/beta-3 and alpha-v/beta-5 receptors. Also binds to phosphatidylserine-enriched cell surfaces in a receptor-independent manner. Zona pellucida-binding protein which may play a role in gamete interaction. Appears to participate in the O-acetylation of GD3 ganglioside sialic acid. This Rattus norvegicus (Rat) protein is Lactadherin (Mfge8).